An 83-amino-acid chain; its full sequence is Toxin TdNa5 (83 aa).

An N-terminal signal peptide occupies residues 1 to 20; the sequence is MKTIIFFIACLMLIDVVVES. One can recognise an LCN-type CS-alpha/beta domain in the interval 21 to 82; that stretch reads KDGYIIEHRG…IFDSNNNKCG (62 aa). Intrachain disulfides connect cysteine 31–cysteine 81, cysteine 35–cysteine 57, cysteine 43–cysteine 62, and cysteine 47–cysteine 64. At cysteine 81 the chain carries Cysteine amide.

Belongs to the long (4 C-C) scorpion toxin superfamily. Sodium channel inhibitor family. Beta subfamily. As to expression, expressed by the venom gland.

Its subcellular location is the secreted. Inhibits the sodium currents (Nav) in an apparent irreversible manner. Produces small depolarization and induces repetitive firing in squid axons. Is specific for arthropods (crickets, triatomides, crabs and squids), but is non-toxic to mice. Shows antibacterial activity against both Gram-positive and Gram-negative bacteria. This is Toxin TdNa5 from Tityus discrepans (Venezuelan scorpion).